The primary structure comprises 402 residues: S-adenosylmethionine synthase (402 aa).

Residue H16 coordinates ATP. D18 serves as a coordination point for Mg(2+). E44 contributes to the K(+) binding site. E57 and Q103 together coordinate L-methionine. Positions 103–113 are flexible loop; it reads QSPDIAQGVDT. Residues 178–180, 249–250, D258, 264–265, A281, and K285 each bind ATP; these read DGK, KF, and RK. Position 258 (D258) interacts with L-methionine. An L-methionine-binding site is contributed by K289.

It belongs to the AdoMet synthase family. Homotetramer; dimer of dimers. The cofactor is Mg(2+). It depends on K(+) as a cofactor.

It is found in the cytoplasm. The enzyme catalyses L-methionine + ATP + H2O = S-adenosyl-L-methionine + phosphate + diphosphate. It functions in the pathway amino-acid biosynthesis; S-adenosyl-L-methionine biosynthesis; S-adenosyl-L-methionine from L-methionine: step 1/1. Functionally, catalyzes the formation of S-adenosylmethionine (AdoMet) from methionine and ATP. The overall synthetic reaction is composed of two sequential steps, AdoMet formation and the subsequent tripolyphosphate hydrolysis which occurs prior to release of AdoMet from the enzyme. The sequence is that of S-adenosylmethionine synthase from Mycolicibacterium vanbaalenii (strain DSM 7251 / JCM 13017 / BCRC 16820 / KCTC 9966 / NRRL B-24157 / PYR-1) (Mycobacterium vanbaalenii).